Consider the following 142-residue polypeptide: MILGIGTDLANIERIQGVLDRFGDRFRNRVFTDVEQAKSERRLDVAGTYAKRWAAKEACSKALGTGLRMGIAWKDMSVSNLSTGQPVMHVTGWAKARLDELTPPGHEAVIHVTLTDDHPWAQAVVMIEARPILPDVQTAQTT.

Asp8 and Glu57 together coordinate Mg(2+).

It belongs to the P-Pant transferase superfamily. AcpS family. Mg(2+) serves as cofactor.

The protein localises to the cytoplasm. The catalysed reaction is apo-[ACP] + CoA = holo-[ACP] + adenosine 3',5'-bisphosphate + H(+). Functionally, transfers the 4'-phosphopantetheine moiety from coenzyme A to a Ser of acyl-carrier-protein. The polypeptide is Holo-[acyl-carrier-protein] synthase (Ruegeria sp. (strain TM1040) (Silicibacter sp.)).